A 338-amino-acid polypeptide reads, in one-letter code: Phosphate transport system permease protein PstC 1 (338 aa).

Transmembrane regions (helical) follow at residues 19–39 (GGIG…VLVI), 93–113 (TSAI…LVIV), 123–143 (AVGI…GLWG), 144–164 (AMTF…HNAP), 181–201 (GMLV…ATTT), 232–252 (LPWV…RALG), 254–274 (TMAV…NIYA), and 295–315 (TNFA…ITLL). An ABC transmembrane type-1 domain is found at 87–320 (IVGTLATSAI…VITLLTNVAA (234 aa)).

It belongs to the binding-protein-dependent transport system permease family. CysTW subfamily.

It is found in the cell membrane. Part of the binding-protein-dependent transport system for phosphate; probably responsible for the translocation of the substrate across the membrane. In Mycobacterium bovis (strain ATCC BAA-935 / AF2122/97), this protein is Phosphate transport system permease protein PstC 1 (pstC1).